A 211-amino-acid polypeptide reads, in one-letter code: Large ribosomal subunit protein bL25 (211 aa).

Over residues 1–18 (MAKTHEIKAERRADEGKG) the composition is skewed to basic and acidic residues. The tract at residues 1 to 20 (MAKTHEIKAERRADEGKGAS) is disordered.

This sequence belongs to the bacterial ribosomal protein bL25 family. CTC subfamily. In terms of assembly, part of the 50S ribosomal subunit; part of the 5S rRNA/L5/L18/L25 subcomplex. Contacts the 5S rRNA. Binds to the 5S rRNA independently of L5 and L18.

This is one of the proteins that binds to the 5S RNA in the ribosome where it forms part of the central protuberance. In Xanthomonas oryzae pv. oryzae (strain MAFF 311018), this protein is Large ribosomal subunit protein bL25.